Here is a 316-residue protein sequence, read N- to C-terminus: MIAGLKGLKLPKDPRSSVTRTATDWAYAAGWMAVRALPEFAVRNAFDTGARYFARHGGPEQLRKNLARVLGVPPAAVPDPLMCASLESYGRYWREVFRLPTMNHRKLARQLDRVIGGLDHLDAALAAGLGAVLALPHSGNWDMAGMWLVQRHGTFTTVAERLKPESLYQRFIDYRESLGFEVLPLSGGERPPFEVLCERLRNNRVVCLMAERDLTRTGVEVDFFGEPTRMPVGPAKLAVETGAALLPTHCWFEGRGWGFQVYPALDCTSGDVAAITQALADRFAQNIAAHPADWHMLQPQWLADLSESRRAQLRSR.

The active-site Proton acceptor is the His-137. Residues His-137 and Arg-175 each contribute to the hexadecanoyl-CoA site. Glu-211 is a catalytic residue. A hexadecanoyl-CoA-binding site is contributed by Glu-240.

This sequence belongs to the LpxL/LpxM/LpxP family.

The protein resides in the cell inner membrane. It catalyses the reaction a 2,6-O-bis(alpha-D-mannopyranosyl)-1-phosphatidyl-1D-myo-inositol + an acyl-CoA = a 2-O-(alpha-D-mannosyl)-6-O-(6-O-acyl-alpha-D-mannosyl)-1-phosphatidyl-1D-myo-inositol + CoA. The catalysed reaction is a 1,2-diacyl-sn-glycero-3-phospho-[alpha-D-mannopyranosyl-(1&lt;-&gt;6)-D-myo-inositol] + an acyl-CoA = a 1,2-diacyl-sn-glycero-3-phospho-[alpha-D-6-acyl-mannopyranosyl-(1&lt;-&gt;6)-D-myo-inositol] + CoA. The protein operates within phospholipid metabolism; phosphatidylinositol metabolism. Its function is as follows. Catalyzes the transfer of a palmitoyl moiety from palmitoyl-CoA to the 6-position of the mannose ring linked to the 2-position of myo-inositol in phosphatidyl-myo-inositol monomannoside (PIM1) or dimannoside (PIM2). In Mycobacterium tuberculosis (strain CDC 1551 / Oshkosh), this protein is Phosphatidylinositol mannoside acyltransferase.